Consider the following 387-residue polypeptide: Pepsin II-2/3 (387 aa).

The signal sequence occupies residues 1 to 15 (MKWLLLLGLLALSEC). The propeptide at 16–59 (IVHKVPLVRKKSLRKNLIEKGLLQDYLKTHTPNPATKYFPKETF) is activation peptide. In terms of domain architecture, Peptidase A1 spans 75–384 (YFGTISIGTP…DRANNQLGLA (310 aa)). D93 is an active-site residue. Residues C106 and C111 are joined by a disulfide bond. S129 carries the post-translational modification Phosphoserine. A disulfide bridge links C267 with C271. Residue D276 is part of the active site. Residues C310 and C343 are joined by a disulfide bond.

It belongs to the peptidase A1 family.

The protein resides in the secreted. It catalyses the reaction Preferential cleavage: hydrophobic, preferably aromatic, residues in P1 and P1' positions. Cleaves 1-Phe-|-Val-2, 4-Gln-|-His-5, 13-Glu-|-Ala-14, 14-Ala-|-Leu-15, 15-Leu-|-Tyr-16, 16-Tyr-|-Leu-17, 23-Gly-|-Phe-24, 24-Phe-|-Phe-25 and 25-Phe-|-Tyr-26 bonds in the B chain of insulin.. Functionally, shows particularly broad specificity; although bonds involving phenylalanine and leucine are preferred, many others are also cleaved to some extent. The chain is Pepsin II-2/3 from Oryctolagus cuniculus (Rabbit).